The sequence spans 219 residues: 2-C-methyl-D-erythritol 4-phosphate cytidylyltransferase (219 aa).

This sequence belongs to the IspD/TarI cytidylyltransferase family. IspD subfamily.

The enzyme catalyses 2-C-methyl-D-erythritol 4-phosphate + CTP + H(+) = 4-CDP-2-C-methyl-D-erythritol + diphosphate. It participates in isoprenoid biosynthesis; isopentenyl diphosphate biosynthesis via DXP pathway; isopentenyl diphosphate from 1-deoxy-D-xylulose 5-phosphate: step 2/6. Its function is as follows. Catalyzes the formation of 4-diphosphocytidyl-2-C-methyl-D-erythritol from CTP and 2-C-methyl-D-erythritol 4-phosphate (MEP). In Chlamydia trachomatis serovar L2 (strain ATCC VR-902B / DSM 19102 / 434/Bu), this protein is 2-C-methyl-D-erythritol 4-phosphate cytidylyltransferase.